Consider the following 520-residue polypeptide: Anthranilate synthase component 1 (520 aa).

L-tryptophan contacts are provided by residues S40 and 291-293; that span reads PYM. 328-329 provides a ligand contact to chorismate; the sequence is GT. E361 lines the Mg(2+) pocket. Chorismate contacts are provided by residues Y449, R469, 483 to 485, and G485; that span reads GAG. Mg(2+) is bound at residue E498.

Belongs to the anthranilate synthase component I family. As to quaternary structure, heterotetramer consisting of two non-identical subunits: a beta subunit (TrpG) and a large lpha subunit (TrpE). Mg(2+) serves as cofactor.

It carries out the reaction chorismate + L-glutamine = anthranilate + pyruvate + L-glutamate + H(+). Its pathway is amino-acid biosynthesis; L-tryptophan biosynthesis; L-tryptophan from chorismate: step 1/5. Its activity is regulated as follows. Cooperatively feedback inhibited by tryptophan. Functionally, part of a heterotetrameric complex that catalyzes the two-step biosynthesis of anthranilate, an intermediate in the biosynthesis of L-tryptophan. In the first step, the glutamine-binding beta subunit (TrpG) of anthranilate synthase (AS) provides the glutamine amidotransferase activity which generates ammonia as a substrate that, along with chorismate, is used in the second step, catalyzed by the large alpha subunit of AS (TrpE) to produce anthranilate. In the absence of TrpG, TrpE can synthesize anthranilate directly from chorismate and high concentrations of ammonia. The polypeptide is Anthranilate synthase component 1 (trpE) (Escherichia coli (strain K12)).